We begin with the raw amino-acid sequence, 640 residues long: Endoglucanase 1 (640 aa).

An N-terminal signal peptide occupies residues 1–24; sequence MARRGGAAASSSMANLLGVALVLA. D94 (nucleophile) is an active-site residue. Active-site residues include H433, D485, and E494. N528 and N548 each carry an N-linked (GlcNAc...) asparagine glycan.

This sequence belongs to the glycosyl hydrolase 9 (cellulase E) family. As to expression, expressed in roots, leaf sheaths and flowers.

The protein localises to the secreted. The catalysed reaction is Endohydrolysis of (1-&gt;4)-beta-D-glucosidic linkages in cellulose, lichenin and cereal beta-D-glucans.. The chain is Endoglucanase 1 (GLU7) from Oryza sativa subsp. japonica (Rice).